Here is a 103-residue protein sequence, read N- to C-terminus: Large ribosomal subunit protein bL21 (103 aa).

Belongs to the bacterial ribosomal protein bL21 family. As to quaternary structure, part of the 50S ribosomal subunit. Contacts protein L20.

Functionally, this protein binds to 23S rRNA in the presence of protein L20. In Lactobacillus johnsonii (strain CNCM I-12250 / La1 / NCC 533), this protein is Large ribosomal subunit protein bL21.